The primary structure comprises 464 residues: JmjC domain-containing protein 1 (464 aa).

The JmjC domain maps to 182-349 (LYAKDMHLFR…QMYTALKEQY (168 aa)).

The chain is JmjC domain-containing protein 1 (jmj1) from Schizosaccharomyces pombe (strain 972 / ATCC 24843) (Fission yeast).